A 273-amino-acid polypeptide reads, in one-letter code: Torsin-1A (273 aa).

The interaction with SNAPIN stretch occupies residues Lys-45–Gly-205. Gly-56–Asn-63 is an ATP binding site. 2 N-linked (GlcNAc...) asparagine glycosylation sites follow: Asn-97 and Asn-112.

The protein belongs to the ClpA/ClpB family. Torsin subfamily. Homohexamer. Interacts with TOR1B; the interaction may be specific of neural tissues. Interacts (ATP-bound) with TOR1AIP1 and TOR1AIP2; the interactions induce ATPase activity. Interacts with KLHL14; preferentially when ATP-free. Interacts with KLC1 (via TPR repeats); the interaction associates TOR1A with the kinesin oligomeric complex. Interacts with COPS4; the interaction associates TOR1A with the CSN complex. Interacts with SNAPIN; the interaction is direct and associates SNAPIN with the CSN complex. Interacts with STON2. Interacts (ATP-bound) with SYNE3 (via KASH domain); the interaction is required for SYNE3 nuclear envelope localization. Interacts with VIM; the interaction associates TOR1A with the cytoskeleton. Interacts with PLEC. Interacts (ATP-bound) with SLC6A3; regulates SLC6A3 transport to the plasma membrane. N-glycosylated.

Its subcellular location is the endoplasmic reticulum lumen. It is found in the nucleus membrane. The protein localises to the cell projection. It localises to the growth cone. The protein resides in the cytoplasmic vesicle membrane. Its subcellular location is the synapse. It is found in the synaptosome. The protein localises to the cytoplasm. It localises to the cytoskeleton. The enzyme catalyses ATP + H2O = ADP + phosphate + H(+). Protein with chaperone functions important for the control of protein folding, processing, stability and localization as well as for the reduction of misfolded protein aggregates. Involved in the regulation of synaptic vesicle recycling, controls STON2 protein stability in collaboration with the COP9 signalosome complex (CSN). In the nucleus, may link the cytoskeleton with the nuclear envelope, this mechanism seems to be crucial for the control of nuclear polarity, cell movement and, specifically in neurons, nuclear envelope integrity. Participates in the cellular trafficking and may regulate the subcellular location of multipass membrane proteins such as the dopamine transporter SLC6A3, leading to the modulation of dopamine neurotransmission. In the endoplasmic reticulum, plays a role in the quality control of protein folding by increasing clearance of misfolded proteins such as SGCE variants or holding them in an intermediate state for proper refolding. May have a redundant function with TOR1B in non-neural tissues. The protein is Torsin-1A (TOR1A) of Cricetus cricetus (Black-bellied hamster).